We begin with the raw amino-acid sequence, 437 residues long: Dolichyl-diphosphooligosaccharide--protein glycosyltransferase subunit wbp1 (437 aa).

Positions 1–19 are cleaved as a signal peptide; it reads MKSALCIALALTWSLLVQA. Residues 20–401 are Lumenal-facing; sequence ARQTVLAVAD…FPRFLPHAYP (382 aa). 2 N-linked (GlcNAc...) asparagine glycosylation sites follow: N275 and N289. A helical membrane pass occupies residues 402–422; that stretch reads YYASCFSVLGAFLLFCGIWLL. Topologically, residues 423-437 are cytoplasmic; that stretch reads QKPAKPVVPSAKKQN.

The protein belongs to the DDOST 48 kDa subunit family. As to quaternary structure, component of the oligosaccharyltransferase (OST) complex.

The protein localises to the endoplasmic reticulum. The protein resides in the membrane. It functions in the pathway protein modification; protein glycosylation. Functionally, subunit of the oligosaccharyl transferase (OST) complex that catalyzes the initial transfer of a defined glycan (Glc(3)Man(9)GlcNAc(2) in eukaryotes) from the lipid carrier dolichol-pyrophosphate to an asparagine residue within an Asn-X-Ser/Thr consensus motif in nascent polypeptide chains, the first step in protein N-glycosylation. N-glycosylation occurs cotranslationally and the complex associates with the Sec61 complex at the channel-forming translocon complex that mediates protein translocation across the endoplasmic reticulum (ER). All subunits are required for a maximal enzyme activity. This chain is Dolichyl-diphosphooligosaccharide--protein glycosyltransferase subunit wbp1 (wbp1), found in Schizosaccharomyces pombe (strain 972 / ATCC 24843) (Fission yeast).